The primary structure comprises 40 residues: Competence and sporulation stimulating factor (40 aa).

The propeptide occupies 1–35; it reads MKLKSKLFVICLAAAAIFTAAGVSANAEALDFHVT.

It belongs to the Phr family. In terms of assembly, interacts with RapC and inhibits its interaction with ComA. Post-translationally, secreted with a propeptide domain, which is cleaved in the cell wall by the secreted serine proteases subtilisin, Epr and Vpr to produce a mature signaling peptide. Contains a predicted signal peptide cleavage site in the N-terminal region, however the propeptide is probably subject to only one processing event, at the N-terminal end of the mature peptide.

Its subcellular location is the secreted. It is found in the cytoplasm. The protein localises to the host cell. Functionally, signaling molecule that serves as a cell density signal for both genetic competence development and sporulation. Secreted during production, but the mature peptide acts intracellularly, indicating that it needs to be imported into the cell to function. At low concentrations, CSF stimulates expression of the genes controlled by ComA, a transcriptional factor that regulates the development of genetic competence. It includes the srfA operon, which encodes a small protein, ComS, required for competence development, and the surfactin biosynthetic enzymes. Acts by inhibiting RapC, which regulates the activity of ComA. At high concentrations, it inhibits expression of those same ComA-controlled genes, maybe by inhibiting activity of the kinase ComP. In addition, high concentrations of CSF can stimulate sporulation under some conditions. Also inhibits RapB activity, with lower efficiency, but does not act on RapA. Is probably involved in the quorum sensing control of sporulation. CSF is a species-specific signaling molecule that partially compensates for the lack of ComX-mediated communication between different strains of B.subtilis. B.subtilis is a well-characterized soil and water saprophyte, but it is also found in enteric flora of many species, including humans. In this environment, CSF can be transported into human intestinal epithelia via OCTN2, a host cell membrane transporter, and can induce cytoprotective heat shock proteins contributing to intestinal homeostasis. In terms of biological role, in addition, in non-domesticated swarming strains of B.subtilis, the residual propeptide exposed on the exterior of the cytoplasmic membrane may have an extracellular role in swarming. This function is probably not dependent on CSF. The sequence is that of Competence and sporulation stimulating factor from Bacillus subtilis (strain 168).